Consider the following 406-residue polypeptide: Elongation factor Tu (406 aa).

The tr-type G domain occupies 10–215; that stretch reads KPHVNVGTIG…AIDEYIPTPV (206 aa). The tract at residues 19-26 is G1; sequence GHVDHGKT. 19 to 26 serves as a coordination point for GTP; sequence GHVDHGKT. Residue Thr26 participates in Mg(2+) binding. The interval 61–65 is G2; the sequence is GITIN. Residues 82 to 85 form a G3 region; it reads DCPG. GTP contacts are provided by residues 82–86 and 137–140; these read DCPGH and NKVD. The segment at 137-140 is G4; the sequence is NKVD. The segment at 175 to 177 is G5; that stretch reads SAL.

Belongs to the TRAFAC class translation factor GTPase superfamily. Classic translation factor GTPase family. EF-Tu/EF-1A subfamily. In terms of assembly, monomer.

It is found in the cytoplasm. The catalysed reaction is GTP + H2O = GDP + phosphate + H(+). Functionally, GTP hydrolase that promotes the GTP-dependent binding of aminoacyl-tRNA to the A-site of ribosomes during protein biosynthesis. The chain is Elongation factor Tu from Thermus aquaticus.